The sequence spans 451 residues: 2-succinylbenzoate--CoA ligase (451 aa).

Belongs to the ATP-dependent AMP-binding enzyme family. MenE subfamily.

It carries out the reaction 2-succinylbenzoate + ATP + CoA = 2-succinylbenzoyl-CoA + AMP + diphosphate. Its pathway is quinol/quinone metabolism; 1,4-dihydroxy-2-naphthoate biosynthesis; 1,4-dihydroxy-2-naphthoate from chorismate: step 5/7. It participates in quinol/quinone metabolism; menaquinone biosynthesis. Its function is as follows. Converts 2-succinylbenzoate (OSB) to 2-succinylbenzoyl-CoA (OSB-CoA). This is 2-succinylbenzoate--CoA ligase from Escherichia coli (strain K12).